A 305-amino-acid polypeptide reads, in one-letter code: Glycine--tRNA ligase alpha subunit (305 aa).

It belongs to the class-II aminoacyl-tRNA synthetase family. In terms of assembly, tetramer of two alpha and two beta subunits.

The protein resides in the cytoplasm. It carries out the reaction tRNA(Gly) + glycine + ATP = glycyl-tRNA(Gly) + AMP + diphosphate. In Streptococcus pyogenes serotype M4 (strain MGAS10750), this protein is Glycine--tRNA ligase alpha subunit.